Here is a 557-residue protein sequence, read N- to C-terminus: Protein NRT1/ PTR FAMILY 5.10 (557 aa).

2 helical membrane-spanning segments follow: residues 49–67 and 79–99; these read FAYYGISSNLITYLTGPLG and AWSGTASLLPLLGAFVADSFL. Residue threonine 104 is modified to Phosphothreonine. 10 helical membrane-spanning segments follow: residues 105 to 125, 144 to 164, 186 to 206, 215 to 235, 320 to 340, 365 to 385, 401 to 421, 443 to 463, 479 to 499, and 526 to 546; these read ILAASALYIVGLGVLTLSAMI, VITFFSALYLVALAQGGHKPC, SFFNWWYFGMCFGTLTTLWVL, WALGFGIPCIAMVVALVVLLL, APIWLTCLVYAVVFAQSPTFF, FISLSIVIFIPIYDRVLIPIA, IGTGIFLSFLAMVVAALVEMK, VWWLVPQYVLFGITDVFAMVG, VGLALYLSIFGIGNFLSSFMI, and YFYWLLACLSFIGLASYLYVA.

The protein belongs to the major facilitator superfamily. Proton-dependent oligopeptide transporter (POT/PTR) (TC 2.A.17) family. As to expression, expressed in shoots, roots and stems. Detected in leaves, flowers and siliques.

It localises to the membrane. This chain is Protein NRT1/ PTR FAMILY 5.10 (NPF5.10), found in Arabidopsis thaliana (Mouse-ear cress).